The chain runs to 732 residues: Wall-associated receptor kinase 2 (732 aa).

Residues 1–23 (MKVQEGLFVVAVFYLAYTQLVKG) form the signal peptide. Over 24-329 (QPRKECQTRC…RKVRPEYFRW (306 aa)) the chain is Extracellular. N-linked (GlcNAc...) asparagine glycans are attached at residues Asn-57, Asn-75, Asn-111, Asn-154, Asn-217, and Asn-246. An EGF-like 1 domain is found at 230 to 277 (GDKTCKQVEYRGVCGGNSTCFDSTGGTGYNCKCLEGFEGNPYLPNGCQ). Disulfide bonds link Cys-234-Cys-249, Cys-243-Cys-260, Cys-262-Cys-276, Cys-282-Cys-295, Cys-289-Cys-304, and Cys-306-Cys-318. One can recognise an EGF-like 2; calcium-binding domain in the interval 278–319 (DINECISSRHNCSEHSTCENTKGSFNCNCPSGYRKDSLNSCT). The N-linked (GlcNAc...) asparagine glycan is linked to Asn-288. A helical membrane pass occupies residues 330–350 (TQIFLGTTIGFSVIMLGISCL). The Cytoplasmic portion of the chain corresponds to 351–732 (QQKIKHRKNT…VTTLDIEAGR (382 aa)). Thr-393 is subject to Phosphothreonine. In terms of domain architecture, Protein kinase spans 404-677 (YHESRILGQG…KEVAAELEAL (274 aa)). Residues 410 to 418 (LGQGGQGTV) and Lys-432 each bind ATP. At Tyr-477 the chain carries Phosphotyrosine. Asp-529 acts as the Proton acceptor in catalysis. Residues Thr-563 and Thr-568 each carry the phosphothreonine modification. Tyr-576 bears the Phosphotyrosine mark.

It belongs to the protein kinase superfamily. Ser/Thr protein kinase family. In terms of tissue distribution, predominantly expressed in green tissues such as stems and leaves. Detected at organ junctions.

The protein localises to the membrane. It catalyses the reaction L-seryl-[protein] + ATP = O-phospho-L-seryl-[protein] + ADP + H(+). It carries out the reaction L-threonyl-[protein] + ATP = O-phospho-L-threonyl-[protein] + ADP + H(+). Its function is as follows. Serine/threonine-protein kinase that may function as a signaling receptor of extracellular matrix component. Binding to pectin may have significance in the control of cell expansion, morphogenesis and development. The protein is Wall-associated receptor kinase 2 (WAK2) of Arabidopsis thaliana (Mouse-ear cress).